Consider the following 60-residue polypeptide: Small ribosomal subunit protein bS21 (60 aa).

Residues 39–60 are disordered; sequence ETPQEKRKRKAVARRRQRTRRR. Basic residues predominate over residues 44-60; sequence KRKRKAVARRRQRTRRR.

This sequence belongs to the bacterial ribosomal protein bS21 family.

This is Small ribosomal subunit protein bS21 from Microcystis aeruginosa (strain NIES-843 / IAM M-2473).